Consider the following 214-residue polypeptide: External core antigen (214 aa).

Residues 1–19 (MQLFHLCLIISCTCPTFQA) form the signal peptide. Positions 25-27 (GWL) are HBEAG. The interval 165–214 (NAPILSTLPETTVVRRRDRGRSPRRRTPSPRRRRSQSPRRRRSQSRESQC) is disordered. Basic residues predominate over residues 178-207 (VRRRDRGRSPRRRTPSPRRRRSQSPRRRRS). One copy of the 1; half-length repeat lies at 186–192 (SPRRRTP). The tract at residues 186-208 (SPRRRTPSPRRRRSQSPRRRRSQ) is 3 X 8 AA repeats of S-P-R-R-R-R-S-Q. The propeptide occupies 186–214 (SPRRRTPSPRRRRSQSPRRRRSQSRESQC). Tandem repeats lie at residues 193-200 (SPRRRRSQ) and 201-208 (SPRRRRSQ).

This sequence belongs to the orthohepadnavirus precore antigen family. In terms of assembly, homodimerizes. Post-translationally, phosphorylated. Cleaved by host furin.

The protein localises to the secreted. The protein resides in the host nucleus. Functionally, may regulate immune response to the intracellular capsid in acting as a T-cell tolerogen, by having an immunoregulatory effect which prevents destruction of infected cells by cytotoxic T-cells. This immune regulation may predispose to chronicity during perinatal infections and prevent severe liver injury during adult infections. This Homo sapiens (Human) protein is External core antigen.